The primary structure comprises 417 residues: MAEFQSYTLNFGPQHPAAHGVLRLVLEMEGEAVRRADPHIGLLHRATEKLAESKPYNQSIGYMDRLDYVSMMCNEHGYVRAIEKLLGIEPPLRAQYIRTMMDEVTRILNHLMWLGGHGLDVGAMTAFLYTFREREDLMDVYEAVSGARMHATYYRPGGVHRDLPDQMPKYEPSAYRSDKELREMNRAREGSVLDFLDDFCERFPACVDEYETLLTENRIWKQRLVDICPVSAERAVELGFTGPLLRGSGVAWDLRKKQPYAAYDRVDFDIPVGVNGDSYDRYLVRVEEMRQSVRIIKQCVDWLRANPGPVRIDDPKVTPPTREEMKDDMESLIHHFKLFTEGYCTPPGEVYAAVEAPKGEFGVYLISDGANKPYRLKVRPPCYYHLAATDEMIRGYMLADVVTLIGSLDVVFGEVDR.

It belongs to the complex I 49 kDa subunit family. As to quaternary structure, NDH-1 is composed of 14 different subunits. Subunits NuoB, C, D, E, F, and G constitute the peripheral sector of the complex.

It localises to the cell inner membrane. It catalyses the reaction a quinone + NADH + 5 H(+)(in) = a quinol + NAD(+) + 4 H(+)(out). NDH-1 shuttles electrons from NADH, via FMN and iron-sulfur (Fe-S) centers, to quinones in the respiratory chain. The immediate electron acceptor for the enzyme in this species is believed to be ubiquinone. Couples the redox reaction to proton translocation (for every two electrons transferred, four hydrogen ions are translocated across the cytoplasmic membrane), and thus conserves the redox energy in a proton gradient. The sequence is that of NADH-quinone oxidoreductase subunit D from Halorhodospira halophila (strain DSM 244 / SL1) (Ectothiorhodospira halophila (strain DSM 244 / SL1)).